Consider the following 186-residue polypeptide: Casparian strip membrane protein 1 (186 aa).

Topologically, residues 1 to 26 (MKSSPAELISEAKSSTQNSKMKRAVS) are cytoplasmic. The helical transmembrane segment at 27–47 (VLDFILRLIAVVATLASAIAM) threads the bilayer. Over 48–74 (GTTDESLPFFTQFIRFRAEYDDLPTLR) the chain is Extracellular. Residues 75 to 95 (LFVVASAFASGYLILSLPLSI) traverse the membrane as a helical segment. At 96-107 (LHITRSSARRTR) the chain is on the cytoplasmic side. The chain crosses the membrane as a helical span at residues 108–128 (VILIILDMVMLTSLTAASSAA). The Extracellular segment spans residues 129–161 (AAIVYLAHKGNAKANWFAFCQQYDSFCERISGS). A helical membrane pass occupies residues 162-182 (LIGSFIAIPLFIMLILFSALV). Residues 183 to 186 (LSKR) are Cytoplasmic-facing.

Belongs to the Casparian strip membrane proteins (CASP) family. In terms of assembly, homodimer and heterodimers.

Its subcellular location is the cell membrane. Functionally, regulates membrane-cell wall junctions and localized cell wall deposition. Required for establishment of the Casparian strip membrane domain (CSD) and the subsequent formation of Casparian strips, a cell wall modification of the root endodermis that determines an apoplastic barrier between the intraorganismal apoplasm and the extraorganismal apoplasm and prevents lateral diffusion. The chain is Casparian strip membrane protein 1 from Lotus japonicus (Lotus corniculatus var. japonicus).